Reading from the N-terminus, the 115-residue chain is Large ribosomal subunit protein bL19 (115 aa).

Belongs to the bacterial ribosomal protein bL19 family.

Its function is as follows. This protein is located at the 30S-50S ribosomal subunit interface and may play a role in the structure and function of the aminoacyl-tRNA binding site. This chain is Large ribosomal subunit protein bL19, found in Streptococcus uberis (strain ATCC BAA-854 / 0140J).